The primary structure comprises 345 residues: Platelet-derived growth factor C (345 aa).

The N-terminal stretch at 1-22 (MLLFGFLLLTFALVSQRQGAEA) is a signal peptide. Residues asparagine 25 and asparagine 55 are each glycosylated (N-linked (GlcNAc...) asparagine). In terms of domain architecture, CUB spans 46–163 (HEKIITVSAN…PGFCIHYTLL (118 aa)). Disulfide bonds link cysteine 104–cysteine 124, cysteine 250–cysteine 294, cysteine 280–cysteine 335, and cysteine 287–cysteine 337.

Belongs to the PDGF/VEGF growth factor family. In terms of assembly, homodimer; disulfide-linked. Interacts with PDGFRA homodimers, and with heterodimers formed by PDGFRA and PDGFRB. Proteolytic removal of the N-terminal CUB domain releasing the core domain is necessary for unmasking the receptor-binding epitopes of the core domain. Cleavage after basic residues in the hinge region (region connecting the CUB and growth factor domains) gives rise to the receptor-binding form.

Its subcellular location is the secreted. Functionally, growth factor that plays an essential role in the regulation of embryonic development, cell proliferation, cell migration, survival and chemotaxis. Potent mitogen and chemoattractant for cells of mesenchymal origin. Required for normal skeleton formation during embryonic development. Required for normal skin morphogenesis during embryonic development. Plays an important role in wound healing, in angiogenesis and blood vessel development. In Gekko japonicus (Schlegel's Japanese gecko), this protein is Platelet-derived growth factor C (PDGFC).